Reading from the N-terminus, the 312-residue chain is tRNA-cytidine(32) 2-sulfurtransferase (312 aa).

The short motif at 47-52 (SGGKDS) is the PP-loop motif element. Cys-122, Cys-125, and Cys-213 together coordinate [4Fe-4S] cluster.

It belongs to the TtcA family. Homodimer. It depends on Mg(2+) as a cofactor. Requires [4Fe-4S] cluster as cofactor.

The protein localises to the cytoplasm. It catalyses the reaction cytidine(32) in tRNA + S-sulfanyl-L-cysteinyl-[cysteine desulfurase] + AH2 + ATP = 2-thiocytidine(32) in tRNA + L-cysteinyl-[cysteine desulfurase] + A + AMP + diphosphate + H(+). It functions in the pathway tRNA modification. Functionally, catalyzes the ATP-dependent 2-thiolation of cytidine in position 32 of tRNA, to form 2-thiocytidine (s(2)C32). The sulfur atoms are provided by the cysteine/cysteine desulfurase (IscS) system. This Actinobacillus succinogenes (strain ATCC 55618 / DSM 22257 / CCUG 43843 / 130Z) protein is tRNA-cytidine(32) 2-sulfurtransferase.